Here is a 201-residue protein sequence, read N- to C-terminus: Nucleoid occlusion factor SlmA (201 aa).

In terms of domain architecture, HTH tetR-type spans 14-75 (KERQQQVLEV…ALIERIEMTL (62 aa)). Positions 38 to 57 (TTERLSKAVGVSEGALYRYF) form a DNA-binding region, H-T-H motif.

The protein belongs to the nucleoid occlusion factor SlmA family. In terms of assembly, homodimer. Interacts with FtsZ.

Its subcellular location is the cytoplasm. It localises to the nucleoid. In terms of biological role, required for nucleoid occlusion (NO) phenomenon, which prevents Z-ring formation and cell division over the nucleoid. Acts as a DNA-associated cell division inhibitor that binds simultaneously chromosomal DNA and FtsZ, and disrupts the assembly of FtsZ polymers. SlmA-DNA-binding sequences (SBS) are dispersed on non-Ter regions of the chromosome, preventing FtsZ polymerization at these regions. The protein is Nucleoid occlusion factor SlmA of Glaesserella parasuis serovar 5 (strain SH0165) (Haemophilus parasuis).